A 35-amino-acid chain; its full sequence is Photosystem II reaction center protein M (35 aa).

A helical transmembrane segment spans residues 7–27 (GFIATILFVLVPTVFLLILYI).

Belongs to the PsbM family. In terms of assembly, PSII is composed of 1 copy each of membrane proteins PsbA, PsbB, PsbC, PsbD, PsbE, PsbF, PsbH, PsbI, PsbJ, PsbK, PsbL, PsbM, PsbT, PsbX, PsbY, PsbZ, Psb30/Ycf12, peripheral proteins PsbO, CyanoQ (PsbQ), PsbU, PsbV and a large number of cofactors. It forms dimeric complexes.

The protein resides in the cellular thylakoid membrane. Its function is as follows. One of the components of the core complex of photosystem II (PSII). PSII is a light-driven water:plastoquinone oxidoreductase that uses light energy to abstract electrons from H(2)O, generating O(2) and a proton gradient subsequently used for ATP formation. It consists of a core antenna complex that captures photons, and an electron transfer chain that converts photonic excitation into a charge separation. This subunit is found at the monomer-monomer interface. This chain is Photosystem II reaction center protein M, found in Crocosphaera subtropica (strain ATCC 51142 / BH68) (Cyanothece sp. (strain ATCC 51142)).